Consider the following 133-residue polypeptide: Profilin (133 aa).

This sequence belongs to the profilin family. In terms of assembly, occurs in many kinds of cells as a complex with monomeric actin in a 1:1 ratio.

Its subcellular location is the cytoplasm. The protein localises to the cytoskeleton. In terms of biological role, binds to actin and affects the structure of the cytoskeleton. At high concentrations, profilin prevents the polymerization of actin, whereas it enhances it at low concentrations. By binding to PIP2, it inhibits the formation of IP3 and DG. The sequence is that of Profilin from Helianthus annuus (Common sunflower).